Reading from the N-terminus, the 66-residue chain is Small ribosomal subunit protein bS21 (66 aa).

Belongs to the bacterial ribosomal protein bS21 family.

The chain is Small ribosomal subunit protein bS21 from Rickettsia typhi (strain ATCC VR-144 / Wilmington).